A 286-amino-acid chain; its full sequence is NADPH-dependent 7-cyano-7-deazaguanine reductase (286 aa).

92–94 (IES) is a substrate binding site. 94-95 (SK) serves as a coordination point for NADPH. C194 (thioimide intermediate) is an active-site residue. Catalysis depends on D201, which acts as the Proton donor. Position 233–234 (233–234 (HE)) interacts with substrate. 262–263 (RG) contacts NADPH.

This sequence belongs to the GTP cyclohydrolase I family. QueF type 2 subfamily. Homodimer.

The protein localises to the cytoplasm. The catalysed reaction is 7-aminomethyl-7-carbaguanine + 2 NADP(+) = 7-cyano-7-deazaguanine + 2 NADPH + 3 H(+). The protein operates within tRNA modification; tRNA-queuosine biosynthesis. Its function is as follows. Catalyzes the NADPH-dependent reduction of 7-cyano-7-deazaguanine (preQ0) to 7-aminomethyl-7-deazaguanine (preQ1). In Shewanella oneidensis (strain ATCC 700550 / JCM 31522 / CIP 106686 / LMG 19005 / NCIMB 14063 / MR-1), this protein is NADPH-dependent 7-cyano-7-deazaguanine reductase.